The chain runs to 364 residues: Chaperone protein DnaJ (364 aa).

One can recognise a J domain in the interval 4-69 (DYYEILGLSK…NKKAKYDRFG (66 aa)). Residues 135–213 (GYKNNINITR…CKGKGSLTKQ (79 aa)) form a CR-type zinc finger. Residues cysteine 148, cysteine 151, cysteine 165, cysteine 168, cysteine 187, cysteine 190, cysteine 201, and cysteine 204 each contribute to the Zn(2+) site. CXXCXGXG motif repeat units lie at residues 148 to 155 (CDSCLGKK), 165 to 172 (CNMCNGSG), 187 to 194 (CSKCYGEG), and 201 to 208 (CKSCKGKG).

This sequence belongs to the DnaJ family. As to quaternary structure, homodimer. Zn(2+) serves as cofactor.

The protein localises to the cytoplasm. Participates actively in the response to hyperosmotic and heat shock by preventing the aggregation of stress-denatured proteins and by disaggregating proteins, also in an autonomous, DnaK-independent fashion. Unfolded proteins bind initially to DnaJ; upon interaction with the DnaJ-bound protein, DnaK hydrolyzes its bound ATP, resulting in the formation of a stable complex. GrpE releases ADP from DnaK; ATP binding to DnaK triggers the release of the substrate protein, thus completing the reaction cycle. Several rounds of ATP-dependent interactions between DnaJ, DnaK and GrpE are required for fully efficient folding. Also involved, together with DnaK and GrpE, in the DNA replication of plasmids through activation of initiation proteins. In Borreliella burgdorferi (strain ATCC 35210 / DSM 4680 / CIP 102532 / B31) (Borrelia burgdorferi), this protein is Chaperone protein DnaJ.